A 453-amino-acid chain; its full sequence is Cyclic GMP-AMP phosphodiesterase SMPDL3A (453 aa).

A signal peptide spans 1 to 22 (MALVRALVCCLLTAWHCRSGLG). Zn(2+) is bound by residues aspartate 45 and histidine 47. A disulfide bridge links cysteine 62 with cysteine 81. A glycan (N-linked (GlcNAc...) asparagine) is linked at asparagine 69. Aspartate 110 contacts Zn(2+). Histidine 114 contributes to the ATP binding site. Asparagine 131 carries an N-linked (GlcNAc...) asparagine glycan. Position 151 (asparagine 151) interacts with Zn(2+). ATP-binding residues include asparagine 151 and histidine 152. N-linked (GlcNAc...) asparagine glycosylation is found at asparagine 222 and asparagine 238. Histidine 252 is a binding site for Zn(2+). The N-linked (GlcNAc...) asparagine glycan is linked to asparagine 263. Zn(2+) contacts are provided by histidine 293 and histidine 295. Residue asparagine 356 is glycosylated (N-linked (GlcNAc...) asparagine). 2 disulfides stabilise this stretch: cysteine 420–cysteine 424 and cysteine 430–cysteine 443. An N-linked (GlcNAc...) asparagine glycan is attached at asparagine 437.

This sequence belongs to the acid sphingomyelinase family. As to quaternary structure, monomer. Homodimer; homodimerizes following 2',3'-cGAMP-binding. The cofactor is Zn(2+). In terms of processing, N-glycosylation is required for protein maturation, secretion and phosphodiesterase activity. Detected in blood serum. Detected in macrophages (at protein level).

It localises to the secreted. The catalysed reaction is 2',3'-cGAMP + H2O = 5'-pGpA(2'-5') + H(+). The enzyme catalyses 5'-pGpA(2'-5') + H2O = 5'-GpA(2'-5') + phosphate. It catalyses the reaction a ribonucleoside 5'-triphosphate + H2O = a ribonucleoside 5'-diphosphate + phosphate + H(+). It carries out the reaction ATP + H2O = ADP + phosphate + H(+). With respect to regulation, requires micromolar levels of Zn(2+) for activity. Inhibited by millimolar levels of Zn(2+). Functionally, cyclic-nucleotide phosphodiesterase that acts as a negative regulator of innate immunity by mediating degradation of 2',3'-cGAMP, thereby inhibiting the cGAS-STING signaling. Specifically linearizes 2',3'-cGAMP into 2'5'-bond pGpA and further hydrolyzes pGpA to produce GpA. Also has in vitro nucleotide phosphodiesterase activity with nucleoside triphosphates, such as ATP. Has in vitro activity with p-nitrophenyl-TMP. Has lower activity with nucleoside diphosphates, and no activity with nucleoside monophosphates. Has in vitro activity with CDP-choline, giving rise to CMP and phosphocholine. Has in vitro activity with CDP-ethanolamine. Does not have sphingomyelin phosphodiesterase activity. This is Cyclic GMP-AMP phosphodiesterase SMPDL3A from Homo sapiens (Human).